A 225-amino-acid polypeptide reads, in one-letter code: Uracil-DNA glycosylase (225 aa).

D65 (proton acceptor) is an active-site residue.

This sequence belongs to the uracil-DNA glycosylase (UDG) superfamily. UNG family.

The protein resides in the cytoplasm. It catalyses the reaction Hydrolyzes single-stranded DNA or mismatched double-stranded DNA and polynucleotides, releasing free uracil.. Excises uracil residues from the DNA which can arise as a result of misincorporation of dUMP residues by DNA polymerase or due to deamination of cytosine. The polypeptide is Uracil-DNA glycosylase (Bacillus thuringiensis (strain Al Hakam)).